Reading from the N-terminus, the 348-residue chain is sn-glycerol-3-phosphate import ATP-binding protein UgpC (348 aa).

In terms of domain architecture, ABC transporter spans 4 to 235; it reads IQLSNIKKQY…PETTFVADFI (232 aa). 37-44 provides a ligand contact to ATP; the sequence is GPSGCGKS.

Belongs to the ABC transporter superfamily. sn-glycerol-3-phosphate importer (TC 3.A.1.1.3) family. As to quaternary structure, the complex is composed of two ATP-binding proteins (UgpC), two transmembrane proteins (UgpA and UgpE) and a solute-binding protein (UgpB).

It localises to the cell inner membrane. It carries out the reaction sn-glycerol 3-phosphate(out) + ATP + H2O = sn-glycerol 3-phosphate(in) + ADP + phosphate + H(+). Its function is as follows. Part of the ABC transporter complex UgpBAEC involved in sn-glycerol-3-phosphate (G3P) import. Responsible for energy coupling to the transport system. This is sn-glycerol-3-phosphate import ATP-binding protein UgpC from Bartonella quintana (strain Toulouse) (Rochalimaea quintana).